The primary structure comprises 111 residues: Small ribosomal subunit protein bS6 (111 aa).

It belongs to the bacterial ribosomal protein bS6 family.

Functionally, binds together with bS18 to 16S ribosomal RNA. This Francisella philomiragia subsp. philomiragia (strain ATCC 25017 / CCUG 19701 / FSC 153 / O#319-036) protein is Small ribosomal subunit protein bS6.